The primary structure comprises 695 residues: MDSDMDYERPNVETIKCVVVGDNAVGKTRLICARACNTTLTQYQLLATHVPTVWAIDQYRVCQEVLERSRDVVDEVSISLRLWDTFGDHHKDRRFAYGRSDVVVLCFSIANPNSLNHVKTMWYQEIKHFCPRTPVVLVGCQLDLRYADLEAVNRARRPLARPIKRGDILPPEKGREVAKELGIPYYETSVFDQFGIKDVFDNAIRAALISRRHLQFWKSHLKKVQKPLLQAPFLPPKAPPPVIKVPECPSAGTSDAACLLDNPLCADVLFVLHDEEHIFAHRIYLATSSSKFYDLFLMECEESPCWGGGAGEEVPCRDFQGRTQSLGSAEEGKEGPQRTPQADPGASSGQDLPESLALQMEASGSEGHALSGWSKGFVSMHREVRVNPISKRVGPVTVVRLDPSMQSGPFRTLLRFLYSGQLDEKEKDLLGLAQMAEVLEMFDLRMMVENIMNKEAFMNQEITKAFHVRKANRIKECLSKGTFSDVTFTLDDGAISAHKPLLICSCEWMAAMFGGSFVESANREVHLPNINKMSMQAVLEYLYTKQLSPNLDLDPLELIALANRFCLTHLVALVEQHAVQELTKAAVSGVSIDGEVLSYLELAQFHNANQLAAWCLHHICTNYNSVCSKFRKEIKSKSADNQEYFERHRWPPVWYLKEEDHYQRVKREREKEDLALNKHHSRRKWCFWHSSPAVA.

The tract at residues 1–210 is rho-like; sequence MDSDMDYERP…DNAIRAALIS (210 aa). Residues 21–28, 84–88, and 140–143 contribute to the GTP site; these read GDNAVGKT, DTFGD, and CQLD. BTB domains follow at residues 266-426 and 484-551; these read ADVL…DEKE and SDVT…SPNL. The segment at 325–351 is disordered; it reads SLGSAEEGKEGPQRTPQADPGASSGQD.

Belongs to the small GTPase superfamily. Rho family. Highest expression in heart and testis.

The polypeptide is Rho-related BTB domain-containing protein 1 (Rhobtb1) (Mus musculus (Mouse)).